Consider the following 94-residue polypeptide: DNA-directed RNA polymerase subunit omega (94 aa).

The protein belongs to the RNA polymerase subunit omega family. The RNAP catalytic core consists of 2 alpha, 1 beta, 1 beta' and 1 omega subunit. When a sigma factor is associated with the core the holoenzyme is formed, which can initiate transcription.

The catalysed reaction is RNA(n) + a ribonucleoside 5'-triphosphate = RNA(n+1) + diphosphate. Promotes RNA polymerase assembly. Latches the N- and C-terminal regions of the beta' subunit thereby facilitating its interaction with the beta and alpha subunits. The polypeptide is DNA-directed RNA polymerase subunit omega (Limosilactobacillus fermentum (strain NBRC 3956 / LMG 18251) (Lactobacillus fermentum)).